The sequence spans 102 residues: Small ribosomal subunit protein uS10 (102 aa).

This sequence belongs to the universal ribosomal protein uS10 family. As to quaternary structure, part of the 30S ribosomal subunit.

Involved in the binding of tRNA to the ribosomes. The sequence is that of Small ribosomal subunit protein uS10 from Sulfolobus acidocaldarius (strain ATCC 33909 / DSM 639 / JCM 8929 / NBRC 15157 / NCIMB 11770).